We begin with the raw amino-acid sequence, 370 residues long: Uroporphyrinogen decarboxylase (370 aa).

Substrate is bound by residues 29-33, Asp-79, Tyr-155, Ser-210, and His-342; that span reads RQAGR.

It belongs to the uroporphyrinogen decarboxylase family. In terms of assembly, homodimer.

It is found in the cytoplasm. It catalyses the reaction uroporphyrinogen III + 4 H(+) = coproporphyrinogen III + 4 CO2. It participates in porphyrin-containing compound metabolism; protoporphyrin-IX biosynthesis; coproporphyrinogen-III from 5-aminolevulinate: step 4/4. Catalyzes the decarboxylation of four acetate groups of uroporphyrinogen-III to yield coproporphyrinogen-III. This Verminephrobacter eiseniae (strain EF01-2) protein is Uroporphyrinogen decarboxylase.